Consider the following 1218-residue polypeptide: ABC transporter NFT1 (1218 aa).

The Extracellular portion of the chain corresponds to 1-29; sequence MIKNGTCPYWERDDLSECARREYIEFKFP. N-linked (GlcNAc...) asparagine glycosylation is present at Asn4. Residues 30–50 traverse the membrane as a helical segment; that stretch reads LFILLTGMIYAFCKVFRAFYL. Topologically, residues 51 to 103 are cytoplasmic; that stretch reads RGKNHTNEAPEFEEQGNGNHEYARFSVLRLKSAWESRSFCNVNNRSTFDKFKK. Residues 104–124 form a helical membrane-spanning segment; the sequence is FIEGAFIVLQLTIHLYILSSM. At 125–130 the chain is on the extracellular side; sequence PMDNKK. Residues 131-151 traverse the membrane as a helical segment; the sequence is FFHQGFLVQMFLWILLLVVIT. Residues 152–169 are Cytoplasmic-facing; that stretch reads LRLISASQSFRWVLACKR. A helical membrane pass occupies residues 170 to 190; sequence DLWAVSFYSYASLFTLSILPL. Residues 191 to 201 lie on the Extracellular side of the membrane; sequence RSVFIGKIKDK. The chain crosses the membrane as a helical span at residues 202 to 222; sequence IMVKYIISETFIDLALLLLLS. Residues 223-302 are Cytoplasmic-facing; the sequence is TSSIEGTRYS…SSKKGRLLPN (80 aa). A helical membrane pass occupies residues 303–323; it reads IICYFKAVFISQLFLAFVSSF. The ABC transmembrane type-1 1 domain maps to 311 to 621; that stretch reads FISQLFLAFV…IASTVSLLIQ (311 aa). Residues 324–351 are Extracellular-facing; that stretch reads LNFVPSLLMPRILSYVNDPKSKSWNLVS. The chain crosses the membrane as a helical span at residues 352–374; the sequence is LYVSSMLVSKIIATTCRGQGLFL. Topologically, residues 375-449 are cytoplasmic; that stretch reads GEKGTMQLRT…VMSIDAFKVS (75 aa). The segment at 410-434 is disordered; sequence NASTSFEENPDSSEAEPRKKSSRKD. Residues 424 to 434 show a composition bias toward basic and acidic residues; it reads AEPRKKSSRKD. Residues 450–470 form a helical membrane-spanning segment; it reads EAMNTFYLACEAVFMTVTALM. Over 471–481 the chain is Extracellular; it reads ILYSLLGWSAF. The chain crosses the membrane as a helical span at residues 482-504; that stretch reads AGTFALLAMIPLNFWCATFYGNY. Topologically, residues 505-558 are cytoplasmic; it reads QADQLILTDKRTSGISEALNSIRVIKLLAWENLFYQKIINVRDGEIRLLKKKAT. Residues 559-579 traverse the membrane as a helical segment; it reads IFFLNHLIWFFGPTLVSAITF. Residues 580–584 are Extracellular-facing; it reads SVFIK. Residues 585–605 form a helical membrane-spanning segment; sequence FQNQTLTPTIAFTALSLFAIL. Topologically, residues 606–953 are cytoplasmic; sequence RTPMDQIAST…KFSAYKWLAD (348 aa). One can recognise an ABC transporter domain in the interval 651–892; the sequence is FGFEDASMEW…NEFLRESINN (242 aa). 686–693 contacts ATP; sequence GPTGSGKS. Over residues 892 to 901 the composition is skewed to polar residues; the sequence is NDSKNTTHNQ. Residues 892-926 are disordered; the sequence is NDSKNTTHNQIDLKRSTTSKKTKNGDPEGGNSQDE. Residues 954-974 form a helical membrane-spanning segment; it reads YFGGLGVVFVFTSSSILIHGI. An ABC transmembrane type-1 2 domain is found at 961–1218; it reads VFVFTSSSIL…SSVMIIMKAS (258 aa). At 975–1013 the chain is on the extracellular side; the sequence is TLSQGFWLRYWLDTGSSGSKSTWLYRIVEGHSNIYFLLT. Residues 1014 to 1034 form a helical membrane-spanning segment; sequence YIIIGLVSSFLTSGKVWIAII. The Cytoplasmic segment spans residues 1035 to 1082; the sequence is SGTNVTKKIFAKLLSSILYAKLRFHNVTPTGRIMNRFSKDMDIIDQQL. Residues 1083 to 1105 traverse the membrane as a helical segment; that stretch reads IPNFEGLSYSVVVCLWIILLIGY. The Extracellular portion of the chain corresponds to 1106-1109; that stretch reads VTPQ. The chain crosses the membrane as a helical span at residues 1110-1132; it reads FLLFAIPLCALYYTVCTLYLRAS. The Cytoplasmic segment spans residues 1133-1197; that stretch reads RELKRIDNIN…NMATEWITYR (65 aa). A helical transmembrane segment spans residues 1198 to 1218; that stretch reads VDIIGTLVLFSSSVMIIMKAS.

Belongs to the ABC transporter superfamily. ABCC family. Conjugate transporter (TC 3.A.1.208) subfamily.

It is found in the membrane. In Saccharomyces cerevisiae (strain ATCC 204508 / S288c) (Baker's yeast), this protein is ABC transporter NFT1 (NFT1).